A 249-amino-acid polypeptide reads, in one-letter code: 5'-nucleotidase SurE (249 aa).

A divalent metal cation contacts are provided by aspartate 8, aspartate 9, serine 39, and asparagine 91.

The protein belongs to the SurE nucleotidase family. Requires a divalent metal cation as cofactor.

Its subcellular location is the cytoplasm. The enzyme catalyses a ribonucleoside 5'-phosphate + H2O = a ribonucleoside + phosphate. Functionally, nucleotidase that shows phosphatase activity on nucleoside 5'-monophosphates. This is 5'-nucleotidase SurE from Pseudomonas putida (strain ATCC 700007 / DSM 6899 / JCM 31910 / BCRC 17059 / LMG 24140 / F1).